A 345-amino-acid polypeptide reads, in one-letter code: Cytoskeleton protein RodZ (345 aa).

Over 1-111 (MNTEASQDQT…LGKKHKKRDG (111 aa)) the chain is Cytoplasmic. The region spanning 19–79 (LRQARESLGL…KLVHLPEDEL (61 aa)) is the HTH cro/C1-type domain. A DNA-binding region (H-T-H motif) is located at residues 30 to 49 (QQTVAERLCLKVSTIRDIEE). A helical; Signal-anchor for type II membrane protein transmembrane segment spans residues 112–132 (WLMSFTWLIVLVVLGLTGAWW). Residues 133–345 (WQNHQAQQAE…RVARLTVGVE (213 aa)) are Periplasmic-facing. Residues 151 to 260 (SAQLSQNGGQ…LPTADAGVSG (110 aa)) form a disordered region. Residues 188–225 (PLTNHSGSAITNSATTSSVPKTTSTEPVDTANTNTTMH) show a composition bias toward polar residues. The segment covering 229–241 (AASAAVSPSQVPQ) has biased composition (low complexity).

Belongs to the RodZ family.

The protein localises to the cell inner membrane. Its function is as follows. Cytoskeletal protein that is involved in cell-shape control through regulation of the length of the long axis. The chain is Cytoskeleton protein RodZ from Yersinia pestis (strain Pestoides F).